The sequence spans 100 residues: Envelope glycoprotein N (100 aa).

An N-terminal signal peptide occupies residues 1-27 (MLSTRFVTLAILACLLVVLGLARGAGG). Topologically, residues 28-63 (DPGVKQRIDVAREEERRDFWHAACSGHGFPITTPST) are virion surface. Residues 64-84 (AAILFYVSLLAVGVAVACQAY) traverse the membrane as a helical segment. Residues 85-100 (RAVLRIVTLEMLQHLH) are Intravirion-facing.

This sequence belongs to the herpesviridae glycoprotein N family. As to quaternary structure, interacts (via N-terminus) with gM (via N-terminus). The gM-gN heterodimer forms the gCII complex.

It localises to the virion membrane. The protein localises to the host membrane. It is found in the host Golgi apparatus. Its subcellular location is the host trans-Golgi network. Its function is as follows. Envelope glycoprotein necessary for proper maturation of gM and modulation of its membrane fusion activity. Also plays a critical role in virion morphogenesis. This chain is Envelope glycoprotein N, found in Equus caballus (Horse).